A 300-amino-acid polypeptide reads, in one-letter code: Histone deacetylase HDT3 (300 aa).

The span at 98-112 (EDEMDLDSEDEDEEL) shows a compositional bias: acidic residues. A disordered region spans residues 98-300 (EDEMDLDSED…AHSKAKHGGK (203 aa)). Over residues 119–132 (ENGKADEKKQKSQE) the composition is skewed to basic and acidic residues. Residues 151-197 (DDDSDEDETDDSDEDETDDSDEGLSPEEGDDDSSDEDDTSDDEEEDT) show a composition bias toward acidic residues. Positions 198–211 (PTPKKPEVGKKRAA) are enriched in basic and acidic residues. A compositionally biased stretch (low complexity) spans 265-275 (SPKSAPKSGVP). The segment at 274 to 297 (VPCKSCSKSFISETAPQAHSKAKH) adopts a C2H2-type zinc-finger fold. Residues 279–290 (CSKSFISETAPQ) show a composition bias toward polar residues.

The protein belongs to the histone deacetylase HD2 family. In terms of assembly, multimer. Possibly forms a homotrimer with HDT1 and/or HDT2.

Its subcellular location is the nucleus. The protein localises to the nucleolus. Mediates the deacetylation of lysine residues on the N-terminal part of the core histones (H2A, H2B, H3 and H4). Histone deacetylation gives a tag for epigenetic repression and plays an important role in transcriptional regulation, cell cycle progression and developmental events. The chain is Histone deacetylase HDT3 (HDT3) from Zea mays (Maize).